We begin with the raw amino-acid sequence, 327 residues long: GMP reductase (327 aa).

The Thioimidate intermediate role is filled by Cys175. Ile204–Val227 contributes to the NADP(+) binding site.

The protein belongs to the IMPDH/GMPR family. GuaC type 2 subfamily.

The enzyme catalyses IMP + NH4(+) + NADP(+) = GMP + NADPH + 2 H(+). In terms of biological role, catalyzes the irreversible NADPH-dependent deamination of GMP to IMP. It functions in the conversion of nucleobase, nucleoside and nucleotide derivatives of G to A nucleotides, and in maintaining the intracellular balance of A and G nucleotides. The polypeptide is GMP reductase (Oceanobacillus iheyensis (strain DSM 14371 / CIP 107618 / JCM 11309 / KCTC 3954 / HTE831)).